The following is a 1085-amino-acid chain: Ankyrin repeat and IBR domain-containing protein 1 (1085 aa).

Residue glycine 2 is the site of N-myristoyl glycine attachment. 2 ANK repeats span residues 45 to 75 (QHNT…NPNK) and 145 to 174 (KKNT…DLFA). The interval 282-322 (CQRSGVQMPTPPPSGYNAWDTLPSPRTPRTTRSSVTSPDEI) is disordered. The span at 304–319 (PSPRTPRTTRSSVTSP) shows a compositional bias: low complexity. The tract at residues 330 to 570 (DTSLCDICMC…GGYYRCTRYE (241 aa)) is TRIAD supradomain. Zn(2+) contacts are provided by cysteine 334, cysteine 337, cysteine 352, histidine 354, cysteine 357, cysteine 360, cysteine 379, cysteine 384, cysteine 466, cysteine 469, histidine 474, cysteine 479, cysteine 520, and cysteine 523. An RING-type 1 zinc finger spans residues 334–384 (CDICMCSISVFEDPVDMPCGHDFCRGCWEAFLNLKIQEGEAHNIFCPAYEC). An IBR-type zinc finger spans residues 402–479 (DKRYLQFDIK…LGEAHEPCDC (78 aa)). The RING-type 2; atypical zinc finger occupies 520–549 (CANCKSPIQKNEGCNHMQCAKCKYDFCWIC). Residue cysteine 533 is part of the active site. 6 residues coordinate Zn(2+): cysteine 538, cysteine 541, cysteine 546, cysteine 549, histidine 556, and cysteine 566. Residues 576-641 (EEQSKEMTVE…RALKETEGGC (66 aa)) are a coiled coil. Serine 738 carries the post-translational modification Phosphoserine. A disordered region spans residues 764-808 (RRRHRQQRRRGDVHSLLSNPTDLDEPSESTFDLPEGSSGRRPGAS). Positions 846 to 865 (EDDPNILLAIQLSLQESGLD) constitute a UIM domain. Residues serine 879 and serine 906 each carry the phosphoserine modification. Disordered regions lie at residues 884 to 907 (GSSL…ALSS), 921 to 959 (GADS…QDPS), and 1014 to 1085 (PPED…VHSV). Over residues 926-959 (PFSTDTLSSRPLSETRSDFCPSSSDLDSAGQDPS) the composition is skewed to polar residues. The segment covering 1018-1033 (SVSKDTGVHEGERAQM) has biased composition (basic and acidic residues). The segment covering 1068–1085 (ASQTPQTSSDWLEQVHSV) has biased composition (polar residues).

It belongs to the RBR family.

The catalysed reaction is [E2 ubiquitin-conjugating enzyme]-S-ubiquitinyl-L-cysteine + [acceptor protein]-L-lysine = [E2 ubiquitin-conjugating enzyme]-L-cysteine + [acceptor protein]-N(6)-ubiquitinyl-L-lysine.. Its function is as follows. Might act as an E3 ubiquitin-protein ligase, or as part of E3 complex, which accepts ubiquitin from specific E2 ubiquitin-conjugating enzymes and then transfers it to substrates. In Mus musculus (Mouse), this protein is Ankyrin repeat and IBR domain-containing protein 1 (Ankib1).